The chain runs to 757 residues: MDYLEVLDFPKVVDLVKRHTFSDLGKRHLDTLKPTVNPWNELELVEELLNYLTRWGEPPIKGLSDITPEMEKLKAGSSLEPWELLRVSSFLEGCDILKNDLTRREYQKLKETFSQLVSFEEFVKEVNRCIEQNGEVSNRASPKLKEIRSEKRSLSTEIKKRADDFVKNHSQILQEQMYVYRDGRYLFPVKASMKRSVRGIVHHLSSSGATVFMEPEEFVELNNRMRLLEEEERLEISRILRHLTNMLLSNLKDLEKNIDLIAHFDSLYARAKFAKENNGIVVKPSSRIKLVNARHPLIPKDRVVPINLELPPNKKGVIITGPNMGGKTVTVKTVGLFTALMMSGFPLLCDEGTELKIFPKIMADIGEEQSIEQSLSTFSSHMKRIVEIVRNADSDSLVILDELGSGTDPVEGAALAIAIIEDLLEKGATLFVTTHLTPVKVFAMNHPLLLNASMEFDPETLSPTYRVLVGVPGGSHAFQIAEKLGLEKRIIENARSRLSQEEMELEGLIRSLHEKISLLEEEKRKLQKEKEEYMKLRAKYEEDYKKLRRMKIEEFDKELKELNDYIRKVKKELDQAIHVAKSGSVEEMRKTVKTLEKEREDLKKKAIEEEAEEEINVGDHVRMEGGTSVGKVVEVKGNTALVDFGFLRVKVPLGKLKKAKKKEEEDREKGTHFVSSFRTEIDIRGMTVEEAEPVVKKFIDDLVMNGIKKGYIIHGKGTGKLATGVWEILRKDRRVVSFRFGTPSEGGTGVTVVEVEV.

Residue 321–328 coordinates ATP; sequence GPNMGGKT. Residues 681 to 756 enclose the Smr domain; that stretch reads IDIRGMTVEE…GTGVTVVEVE (76 aa).

The protein belongs to the DNA mismatch repair MutS family. MutS2 subfamily. As to quaternary structure, homodimer. Binds to stalled ribosomes, contacting rRNA.

Its function is as follows. Endonuclease that is involved in the suppression of homologous recombination and thus may have a key role in the control of bacterial genetic diversity. In terms of biological role, acts as a ribosome collision sensor, splitting the ribosome into its 2 subunits. Detects stalled/collided 70S ribosomes which it binds and splits by an ATP-hydrolysis driven conformational change. Acts upstream of the ribosome quality control system (RQC), a ribosome-associated complex that mediates the extraction of incompletely synthesized nascent chains from stalled ribosomes and their subsequent degradation. Probably generates substrates for RQC. The chain is Endonuclease MutS2 from Thermotoga neapolitana (strain ATCC 49049 / DSM 4359 / NBRC 107923 / NS-E).